Consider the following 247-residue polypeptide: tRNA (guanine-N(1)-)-methyltransferase (247 aa).

S-adenosyl-L-methionine-binding positions include Gly113 and 133-138; that span reads IGDFVM.

This sequence belongs to the RNA methyltransferase TrmD family. In terms of assembly, homodimer.

The protein localises to the cytoplasm. It carries out the reaction guanosine(37) in tRNA + S-adenosyl-L-methionine = N(1)-methylguanosine(37) in tRNA + S-adenosyl-L-homocysteine + H(+). Functionally, specifically methylates guanosine-37 in various tRNAs. The sequence is that of tRNA (guanine-N(1)-)-methyltransferase from Vibrio campbellii (strain ATCC BAA-1116).